Here is a 443-residue protein sequence, read N- to C-terminus: Phosphoglucosamine mutase (443 aa).

The active-site Phosphoserine intermediate is the S101. 4 residues coordinate Mg(2+): S101, D239, D241, and D243. The residue at position 101 (S101) is a Phosphoserine.

The protein belongs to the phosphohexose mutase family. Requires Mg(2+) as cofactor. Post-translationally, activated by phosphorylation.

It carries out the reaction alpha-D-glucosamine 1-phosphate = D-glucosamine 6-phosphate. Its function is as follows. Catalyzes the conversion of glucosamine-6-phosphate to glucosamine-1-phosphate. The sequence is that of Phosphoglucosamine mutase from Francisella tularensis subsp. tularensis (strain FSC 198).